The chain runs to 360 residues: Phospho-N-acetylmuramoyl-pentapeptide-transferase (360 aa).

The next 10 membrane-spanning stretches (helical) occupy residues 27 to 47, 73 to 93, 94 to 114, 132 to 152, 168 to 188, 199 to 219, 236 to 256, 263 to 283, 288 to 308, and 338 to 358; these read IVSL…MIAW, TMGG…WANL, SNPY…VGFV, WKYF…YSIG, VMPQ…VGTS, GLAI…AWAT, ASEL…FLWF, VFMG…IAVL, FLLV…ILQV, and VIVR…ATLK.

The protein belongs to the glycosyltransferase 4 family. MraY subfamily. It depends on Mg(2+) as a cofactor.

It localises to the cell inner membrane. It catalyses the reaction UDP-N-acetyl-alpha-D-muramoyl-L-alanyl-gamma-D-glutamyl-meso-2,6-diaminopimeloyl-D-alanyl-D-alanine + di-trans,octa-cis-undecaprenyl phosphate = di-trans,octa-cis-undecaprenyl diphospho-N-acetyl-alpha-D-muramoyl-L-alanyl-D-glutamyl-meso-2,6-diaminopimeloyl-D-alanyl-D-alanine + UMP. It functions in the pathway cell wall biogenesis; peptidoglycan biosynthesis. Its function is as follows. Catalyzes the initial step of the lipid cycle reactions in the biosynthesis of the cell wall peptidoglycan: transfers peptidoglycan precursor phospho-MurNAc-pentapeptide from UDP-MurNAc-pentapeptide onto the lipid carrier undecaprenyl phosphate, yielding undecaprenyl-pyrophosphoryl-MurNAc-pentapeptide, known as lipid I. The sequence is that of Phospho-N-acetylmuramoyl-pentapeptide-transferase from Pectobacterium atrosepticum (strain SCRI 1043 / ATCC BAA-672) (Erwinia carotovora subsp. atroseptica).